The following is a 210-amino-acid chain: Large ribosomal subunit protein uL3 (210 aa).

This sequence belongs to the universal ribosomal protein uL3 family. Part of the 50S ribosomal subunit. Forms a cluster with proteins L14 and L19.

One of the primary rRNA binding proteins, it binds directly near the 3'-end of the 23S rRNA, where it nucleates assembly of the 50S subunit. This chain is Large ribosomal subunit protein uL3, found in Solibacter usitatus (strain Ellin6076).